The sequence spans 2922 residues: Small ribosomal subunit protein uS4c (2922 aa).

Residues 111 to 174 (MRLDNIVFRL…ISMELVSRFL (64 aa)) form the S4 RNA-binding domain.

This sequence belongs to the universal ribosomal protein uS4 family. As to quaternary structure, part of the 30S ribosomal subunit. Contacts protein S5. The interaction surface between S4 and S5 is involved in control of translational fidelity.

The protein localises to the plastid. The protein resides in the chloroplast. Functionally, one of the primary rRNA binding proteins, it binds directly to 16S rRNA where it nucleates assembly of the body of the 30S subunit. With S5 and S12 plays an important role in translational accuracy. The chain is Small ribosomal subunit protein uS4c (rps4) from Stigeoclonium helveticum (Green alga).